The primary structure comprises 183 residues: Adenine phosphoribosyltransferase (183 aa).

It belongs to the purine/pyrimidine phosphoribosyltransferase family. In terms of assembly, homodimer.

The protein localises to the cytoplasm. It carries out the reaction AMP + diphosphate = 5-phospho-alpha-D-ribose 1-diphosphate + adenine. It participates in purine metabolism; AMP biosynthesis via salvage pathway; AMP from adenine: step 1/1. Functionally, catalyzes a salvage reaction resulting in the formation of AMP, that is energically less costly than de novo synthesis. In Escherichia coli (strain K12 / MC4100 / BW2952), this protein is Adenine phosphoribosyltransferase.